The primary structure comprises 533 residues: 2,3-bisphosphoglycerate-independent phosphoglycerate mutase (533 aa).

Mn(2+) contacts are provided by aspartate 15 and serine 65. The Phosphoserine intermediate role is filled by serine 65. Substrate is bound by residues histidine 126, 156–157 (RD), arginine 188, arginine 194, 258–261 (RPDR), and lysine 331. Mn(2+)-binding residues include aspartate 398, histidine 402, aspartate 439, histidine 440, and histidine 457.

It belongs to the BPG-independent phosphoglycerate mutase family. Monomer. The cofactor is Mn(2+).

It carries out the reaction (2R)-2-phosphoglycerate = (2R)-3-phosphoglycerate. It functions in the pathway carbohydrate degradation; glycolysis; pyruvate from D-glyceraldehyde 3-phosphate: step 3/5. Catalyzes the interconversion of 2-phosphoglycerate and 3-phosphoglycerate. The protein is 2,3-bisphosphoglycerate-independent phosphoglycerate mutase of Trichormus variabilis (strain ATCC 29413 / PCC 7937) (Anabaena variabilis).